The primary structure comprises 218 residues: Hypoxanthine-guanine phosphoribosyltransferase (218 aa).

GMP is bound by residues lysine 69, 134–142 (EDIIDTGKT), lysine 166, 186–188 (KFV), and aspartate 194. The active-site Proton acceptor is the aspartate 138. Aspartate 194 contributes to the Mg(2+) binding site.

The protein belongs to the purine/pyrimidine phosphoribosyltransferase family. Homotetramer. The cofactor is Mg(2+).

It is found in the cytoplasm. The enzyme catalyses IMP + diphosphate = hypoxanthine + 5-phospho-alpha-D-ribose 1-diphosphate. It catalyses the reaction GMP + diphosphate = guanine + 5-phospho-alpha-D-ribose 1-diphosphate. Its pathway is purine metabolism; IMP biosynthesis via salvage pathway; IMP from hypoxanthine: step 1/1. In terms of biological role, converts guanine to guanosine monophosphate, and hypoxanthine to inosine monophosphate. Transfers the 5-phosphoribosyl group from 5-phosphoribosylpyrophosphate onto the purine. Plays a central role in the generation of purine nucleotides through the purine salvage pathway. In Gallus gallus (Chicken), this protein is Hypoxanthine-guanine phosphoribosyltransferase (HPRT1).